A 446-amino-acid polypeptide reads, in one-letter code: Glucarate dehydratase-related protein (446 aa).

His31, Thr104, Tyr149, and Lys204 together coordinate substrate. The active-site Proton acceptor is the Lys206. Mg(2+) is bound by residues Asp234, Glu265, and Asn288. 234 to 236 (DPN) provides a ligand contact to substrate. Substrate contacts are provided by residues Asn288, 338–340 (HSN), His367, and Arg421. The Proton acceptor role is filled by His338.

The protein belongs to the mandelate racemase/muconate lactonizing enzyme family. GlucD subfamily. The cofactor is a divalent metal cation.

Its function is as follows. Does not seem to have an in-vivo activity on glucarate or idarate. Its real substrate is unknown. The protein is Glucarate dehydratase-related protein (gudX) of Escherichia coli (strain K12).